Here is a 188-residue protein sequence, read N- to C-terminus: V-type proton ATPase subunit E (188 aa).

This sequence belongs to the V-ATPase E subunit family.

Functionally, produces ATP from ADP in the presence of a proton gradient across the membrane. The sequence is that of V-type proton ATPase subunit E from Dictyoglomus turgidum (strain DSM 6724 / Z-1310).